We begin with the raw amino-acid sequence, 238 residues long: MADS-box protein 04g005320 (238 aa).

Positions 1–61 constitute an MADS-box domain; the sequence is MGRGKVELKR…GKLYEFCSTS (61 aa). The K-box domain maps to 87–177; sequence SQNNYQEYMK…KTKLEENSVA (91 aa).

It localises to the nucleus. Probable MADS-box transcription factor that functions with J2 and EJ2 in meristem maturation. The protein is MADS-box protein 04g005320 of Solanum lycopersicum (Tomato).